Here is a 1098-residue protein sequence, read N- to C-terminus: MQLNYDYFTKPECKILLPKVQTNPRYKNFTQLYYTVGDEEQFWVETTLKPFLEKDGDASPQSQQRVASQENVWRNLETFVPWQGYENISAAEVEPTFQYMFNRFKKGIYVSIAGGRLQSFVPFSKANFTNDWADRIQIDPKYGSFLNFLKAQHDLNNKWNGTTYKWNPNKVCPDPRYWYANNCIVRYENPISESHSNVAQIKSMLLELVEKRHISDVKFFINRRDFPLLTRDGTEAYDNIFGDETPVPEQYRHRKWLPILSMCTSERFADIAIPTHEDWSRVKSDEGIYFPPVCRNYTFQFVHTWSDKVAKAVFRGSNTGCGWNETNNVRLKLARLGTVRPDLLDAGITNWNLRVRVSKHSPYLQIPDPGTLTAVDRLSPHQQSQYKFIVHVEGHVSAFRLSLELGMKSCILLVQSLHGWKMWYSDLLKPWVHYVPVRPDLSDLFDRIEWCRANDAQCRAMAENAYQFYRTHLDKESILDHLQHTLNRLARQFTAQEPPTDPLLLQMEWERQALAQLAPQKTSALTGQFPPSPFRNWGSLCGFEKFVTQALDPRMEMGSVAVPGKTIFKSKTTKVTLYQLGGTWFVAKRTINLMKKLEFLHEGFIGKMVLNNLVKWCPNYLYTFHYRDEPFISYTWKDYNSLEGGSRVFNPTVKESTVMQEFIDGPTLQAFLQTCTFKSYFEVLFSLCCALLLGQSLCGFVHHDLKPWNVVVQVLPEPTVVEYTVRPDPNSGEKFLTWKIKTRYIPVMIDYGKSHVVYRNVHYGVADQFATNWSLDLQTLLVSTLNEWMLRYHQSEGKENPSPDYGDLVYTANFLSTRPLKTVRDLAGWTLANKKFQTQAPLDFKIFPSNAPVIEDFLKHMAPLTKKYKISFGKGAATAAGWSFNPRQIVDLAFSLDPDQQANAWVQVPRRIYRNPLPAATNKLVATFIAQQLWNGLVVPKLGFVDWAQSENLNRSVAESIWNEYDKMEKFLTQHYWSKIDKMTPAPLTIEPYPDAFQTLVQLRLKPTRSLFLSSDKLQRLRRNIAPQYDAPAFPDYDQYRGMILDMVKDSGPFKLTPDLAAFYLDNLKPLFDEKIMEAVTNLETIKFYTQPTTKSKF.

This is an uncharacterized protein from Invertebrate iridescent virus 3 (IIV-3).